Here is a 468-residue protein sequence, read N- to C-terminus: 3-isopropylmalate dehydratase large subunit (468 aa).

Residues Cys-347, Cys-407, and Cys-410 each contribute to the [4Fe-4S] cluster site.

This sequence belongs to the aconitase/IPM isomerase family. LeuC type 1 subfamily. Heterodimer of LeuC and LeuD. The cofactor is [4Fe-4S] cluster.

It carries out the reaction (2R,3S)-3-isopropylmalate = (2S)-2-isopropylmalate. It participates in amino-acid biosynthesis; L-leucine biosynthesis; L-leucine from 3-methyl-2-oxobutanoate: step 2/4. Catalyzes the isomerization between 2-isopropylmalate and 3-isopropylmalate, via the formation of 2-isopropylmaleate. This Prochlorococcus marinus (strain SARG / CCMP1375 / SS120) protein is 3-isopropylmalate dehydratase large subunit.